The following is a 258-amino-acid chain: 4-hydroxy-tetrahydrodipicolinate reductase (258 aa).

10–15 (GCLGRM) lines the NAD(+) pocket. Position 38 (Lys-38) interacts with NADP(+). Residues 89–91 (GTT) and 113–116 (AGNM) contribute to the NAD(+) site. His-146 acts as the Proton donor/acceptor in catalysis. His-147 provides a ligand contact to (S)-2,3,4,5-tetrahydrodipicolinate. The Proton donor role is filled by Lys-150. 156-157 (GT) contributes to the (S)-2,3,4,5-tetrahydrodipicolinate binding site.

It belongs to the DapB family.

It localises to the cytoplasm. It carries out the reaction (S)-2,3,4,5-tetrahydrodipicolinate + NAD(+) + H2O = (2S,4S)-4-hydroxy-2,3,4,5-tetrahydrodipicolinate + NADH + H(+). The enzyme catalyses (S)-2,3,4,5-tetrahydrodipicolinate + NADP(+) + H2O = (2S,4S)-4-hydroxy-2,3,4,5-tetrahydrodipicolinate + NADPH + H(+). It functions in the pathway amino-acid biosynthesis; L-lysine biosynthesis via DAP pathway; (S)-tetrahydrodipicolinate from L-aspartate: step 4/4. Its function is as follows. Catalyzes the conversion of 4-hydroxy-tetrahydrodipicolinate (HTPA) to tetrahydrodipicolinate. The sequence is that of 4-hydroxy-tetrahydrodipicolinate reductase from Pelagibacter ubique (strain HTCC1062).